The sequence spans 138 residues: Probable lactoylglutathione lyase (138 aa).

A VOC domain is found at Arg-5 to Asn-129. His-8 contacts Ni(2+). Arg-12 is a substrate binding site. Glu-59 provides a ligand contact to Ni(2+). 2 residues coordinate substrate: Asn-63 and His-77. Positions 77 and 125 each coordinate Ni(2+). Residue Glu-125 is the Proton donor/acceptor of the active site.

It belongs to the glyoxalase I family. Ni(2+) is required as a cofactor.

It carries out the reaction (R)-S-lactoylglutathione = methylglyoxal + glutathione. It functions in the pathway secondary metabolite metabolism; methylglyoxal degradation; (R)-lactate from methylglyoxal: step 1/2. Its function is as follows. Catalyzes the conversion of hemimercaptal, formed from methylglyoxal and glutathione, to S-lactoylglutathione. This Vibrio parahaemolyticus serotype O3:K6 (strain RIMD 2210633) protein is Probable lactoylglutathione lyase (gloA).